Here is a 533-residue protein sequence, read N- to C-terminus: Histone-arginine methyltransferase CARMER (533 aa).

Residues 143–452 enclose the SAM-dependent MTase PRMT-type domain; that stretch reads ASQYFQFYGY…QSYDVTIDLH (310 aa). Residues Gln156, Arg165, Gly189, Glu211, Glu240, and Thr268 each contribute to the S-adenosyl-L-methionine site. Residue Arg503 is modified to Asymmetric dimethylarginine; by autocatalysis.

Belongs to the class I-like SAM-binding methyltransferase superfamily. Protein arginine N-methyltransferase family. Homodimer. The dimethylated protein is the major form.

It localises to the cytoplasm. Its subcellular location is the nucleus. The catalysed reaction is L-arginyl-[protein] + 2 S-adenosyl-L-methionine = N(omega),N(omega)-dimethyl-L-arginyl-[protein] + 2 S-adenosyl-L-homocysteine + 2 H(+). Its function is as follows. Methylates (mono- and asymmetric dimethylation) the guanidino nitrogens of arginyl residues in proteins. May methylate histone H3 at 'Arg-17' and activate transcription via chromatin remodeling. In Drosophila willistoni (Fruit fly), this protein is Histone-arginine methyltransferase CARMER (Art4).